A 1024-amino-acid polypeptide reads, in one-letter code: Beta-galactosidase (1024 aa).

Substrate-binding residues include Asn-103 and Asp-202. Residue Asp-202 participates in Na(+) binding. Mg(2+)-binding residues include Glu-417, His-419, and Glu-462. Substrate contacts are provided by residues Glu-462 and 538–541; that span reads EYAH. Glu-462 functions as the Proton donor in the catalytic mechanism. The Nucleophile role is filled by Glu-538. Position 598 (Asn-598) interacts with Mg(2+). Na(+)-binding residues include Phe-602 and Asn-605. Residues Asn-605 and Trp-1000 each contribute to the substrate site.

Belongs to the glycosyl hydrolase 2 family. As to quaternary structure, homotetramer. It depends on Mg(2+) as a cofactor. Requires Na(+) as cofactor.

It carries out the reaction Hydrolysis of terminal non-reducing beta-D-galactose residues in beta-D-galactosides.. The protein is Beta-galactosidase of Escherichia coli O157:H7.